The sequence spans 796 residues: Probable phosphoketolase (796 aa).

Belongs to the XFP family. The cofactor is thiamine diphosphate.

This is Probable phosphoketolase from Clostridium acetobutylicum (strain ATCC 824 / DSM 792 / JCM 1419 / IAM 19013 / LMG 5710 / NBRC 13948 / NRRL B-527 / VKM B-1787 / 2291 / W).